The primary structure comprises 1481 residues: MALNGRTMFPAFKYYAIDYLQEDIIKERLYRDALLLQIPSCLNQDKNIIDDKYRTPWTRAIPVQEMEDNSVLEQWRTRFCVEGVPEKKTVTGVMINGTFEEIVPSSNPNSPPGIENDKLFPSKDYVDDFIPVKCSLYYPGVKAEHQGLLIDEEMIFMNKAMDNHLPTVNGLLSRLKLYLVKDPFLDFKEELSGKDNFTEYFSVQECSEPFVRDFHMAEETFCKKKLPSVFPSGFKSLISTNPKQEILILPPSKLKKPLNSIPKIMDSVDESECFKGDITSKHEFDTEDIKCNSTENLTFASLCEPECSEPGDLEMPPTHLILPRQHSAVSSLHMGFQTFPFSATCKINLLSAGESANKYCMLWQLGGCRNSWVSFLLTVPRFQEPSSQYSLADMRNIFSVKGDSLVINPAKAKGWRQARLHPIMAETLAHLKAYLCHNGLSSQETKLEIFLPTKVFQLESWLELKSRPLPIVPISEKSTDVHQLHPQKRPIPSSEKEVPHLCLSGESISVKKSKVEANPKNDQEPEARIMQKPENSCVGLGCSSQVPSAESASSSQIQASYDKKQDDLDLLSEFIILRSKHQTFPSEADVDVKSHDHDQNNEFQDKEKYSLTLQEESLVASNSKAPEERCEERTDGVIEIPASDTQCQAYCLLEATANPILKELVCLCTYPAANWKFATVNFDQTRFFLKEQEKKINDATHPDKNDDRKMTFRHAALLHLLITIRDVLLTCNLDTALGYLSNAKDIYKSVLDSRLDNIWRQLKILQFIKEKRPKSNYKIQELQCQILSRLQNQQQMKVLIIIRMDSDGEKHLLIKTLKKIEGLTMTVLRSNDRKKILETTSILKGTNACVVVHNHSIGADFPWSSFSLVVEYNHVGHSCWAEHCQLLDIPFLAFKVAVPDTALQRDALLDGFGGFLLKIPIPYVFFASEGLLNTPEILRLLESNYNITLVERCCCGSLKLFGSTECYVVVTVDEHTAIVVQDLEELHHEKASDNIIMRLMALSFQYSCCWIILYSKETLNSQYHLTEETLRHLAQVYAALVSSGLKSEELDVKLIIAPGVEETALIIRQIADHNLMTSTRDPHEWLDKSWVEVSPSKEEMSLLDFPCINPLVAQLMLHRAPSLHWLLIATPAELQELLPQVPGKVLKHFCSITSLFKISSPSMTKSSQISSLQEDMNQTDLFISQSSAPIIQEQEEYYPYEDSEGTSSSPVELRATPCMLPSAAPHSQRGCWEDPSCGPDPVQNNPSLMNAESKKVTWPSVPSWSDSESDVFSLARTQVSCEPIMTLTDSQRRGTNGFVNCPEAKGPRNMQVSTPVFLPENSQSHLHWDFKKNSCRKQIYSFNPSCGTEQTTYNKWYSWKDDFSSNQPECLWDEMEDVTYRNANAGTRETFWRELPAVPSWDSPCASDSNANQRGFKGLDFCQRAGNYLGQRSLPVSSSNWGDYKTPTDLMYSQVPQPKKRRLMYEKVPGRVDGQTRLKFL.

Disordered regions lie at residues 479 to 498 (TDVH…EKEV) and 512 to 560 (KSKV…IQAS). Residues 513–531 (SKVEANPKNDQEPEARIMQ) are compositionally biased toward basic and acidic residues. Residues 543 to 560 (SSQVPSAESASSSQIQAS) show a composition bias toward low complexity.

Belongs to the XPF family. Highly divergent. As to quaternary structure, interacts with TEX11. Interacts with SPO16. Mainly expressed in adult testis.

It is found in the chromosome. ATPase required during meiosis for the formation of crossover recombination intermediates. Binds DNA: preferentially binds to single-stranded DNA and DNA branched structures. Does not show nuclease activity in vitro, but shows ATPase activity, which is stimulated by the presence of single-stranded DNA. Plays a key role in homologous recombination and crossing-over in meiotic prophase I in male and female germ cells. Required for proper synaptonemal complex assembly and homologous chromosome pairing. Required for recruitment of TEX11 and MSH4 to recombination intermediates. This chain is Protein shortage in chiasmata 1 ortholog, found in Mus musculus (Mouse).